A 692-amino-acid polypeptide reads, in one-letter code: Methionine--tRNA ligase (692 aa).

The 'HIGH' region signature appears at 12 to 22 (PYANGSFHIGH). Zn(2+)-binding residues include Cys-143, Cys-146, Cys-156, and Cys-159. Residues 341–345 (KMSKS) carry the 'KMSKS' region motif. Lys-344 provides a ligand contact to ATP. One can recognise a tRNA-binding domain in the interval 586-692 (DFAKIDLRIA…PGAQPGMRVR (107 aa)).

This sequence belongs to the class-I aminoacyl-tRNA synthetase family. MetG type 1 subfamily. In terms of assembly, homodimer. Zn(2+) serves as cofactor.

Its subcellular location is the cytoplasm. The catalysed reaction is tRNA(Met) + L-methionine + ATP = L-methionyl-tRNA(Met) + AMP + diphosphate. In terms of biological role, is required not only for elongation of protein synthesis but also for the initiation of all mRNA translation through initiator tRNA(fMet) aminoacylation. In Bordetella pertussis (strain Tohama I / ATCC BAA-589 / NCTC 13251), this protein is Methionine--tRNA ligase.